The sequence spans 1507 residues: DDB1- and CUL4-associated factor 1 (1507 aa).

Residues 141–500 (QPLRTYSTGL…STLEILNLED (360 aa)) form a protein kinase-like region. Residues S202 and S255 each carry the phosphoserine modification. The disordered stretch occupies residues 242–288 (HLDSGHKTSSRVNSTTKPEDGGLKKNKSAKQGDRENFRKAKQKLGFS). Positions 562–593 (SYTHEQIVEMMEFLIEYGPAQLYWEPAEVFLK) constitute a Chromo domain. K701 carries the N6-acetyllysine modification. S828 is modified (phosphoserine). The LisH domain maps to 846 to 878 (PEKELLLLIRNHLISKGLGETATVLTKEADLPM). T888 bears the Phosphothreonine mark. 2 positions are modified to phosphoserine: S895 and S898. The interval 917 to 947 (AAVGASAPSAPTAHPQPRPPQGPLALPGPSY) is disordered. S979 and S1000 each carry phosphoserine. WD repeat units follow at residues 1091–1130 (EDES…EEAS), 1133–1174 (CHNS…DMKH), 1176–1213 (FTED…KLLT), 1215–1247 (FNPD…WDVR), and 1248–1290 (SAQA…LLHT). Positions 1091 to 1290 (EDESGFTCCA…DLRTFHLLHT (200 aa)) are WD repeat-like region. 2 consecutive short sequence motifs (DWD box) follow at residues 1242–1249 (VLWDVRSA) and 1278–1285 (EIWDLRTF). Residue S1328 is modified to Phosphoserine. A disordered region spans residues 1393–1507 (RLAEDEDEEE…EDDIILSLNE (115 aa)). 2 stretches are compositionally biased toward acidic residues: residues 1396–1483 (EDED…EEVE) and 1490–1501 (DSSDNSDLEDDI). Residues 1418–1507 (DDDTDDLDEL…EDDIILSLNE (90 aa)) form an interaction with NF2 region.

It belongs to the VPRBP/DCAF1 family. In terms of assembly, component of the DCX (DDB1-CUL4-X-box) E3 ubiquitin-protein ligase complex, named CUL4A-RBX1-DDB1-DCAF1/VPRBP complex. Interacts with DDB1; the interaction is direct. Also forms a ternary complex with DDA1 and DDB1. Interacts with NF2 (via FERM domain). Component of the EDVP complex, a E3 ligase complex containing DYRK2, EDD/UBR5, DDB1 and DCAF1. Interacts with DYRK2; the interaction is direct. Interacts with RAG1; the interaction is direct. Interacts with LLGL1 and LLGL2. Interacts with histone H3. Interacts with ESR1 and LATS1; probably recruited by LATS1 to promote ESR1 ubiquitination and ubiquitin-mediated proteasomal degradation. Directly interacts with TET1, TET2 and TET3 (via C-terminus). Interacts with CEP78; promoting DCAF1 localization to centrosomes. As to quaternary structure, (Microbial infection) Interacts with HIV-1 virus Vpr protein; the interaction is direct. (Microbial infection) Interacts with HIV-2 virus Vpx protein; the interaction is direct and the complex recruits SAMHD1 to promote its ubiquitin-dependent proteasomal degradation. In terms of assembly, (Microbial infection) Interacts (via C-terminus) with human cytomegalovirus protein UL35; this interaction induces the accumulation of cells in the G2 phase of the cell cycle. As to expression, ubiquitously expressed.

The protein localises to the cytoplasm. The protein resides in the nucleus. It is found in the cytoskeleton. It localises to the microtubule organizing center. Its subcellular location is the centrosome. It carries out the reaction L-seryl-[protein] + ATP = O-phospho-L-seryl-[protein] + ADP + H(+). The catalysed reaction is L-threonyl-[protein] + ATP = O-phospho-L-threonyl-[protein] + ADP + H(+). Its pathway is protein modification; protein ubiquitination. Acts both as a substrate recognition component of E3 ubiquitin-protein ligase complexes and as an atypical serine/threonine-protein kinase, playing key roles in various processes such as cell cycle, telomerase regulation and histone modification. Probable substrate-specific adapter of a DCX (DDB1-CUL4-X-box) E3 ubiquitin-protein ligase complex, named CUL4A-RBX1-DDB1-DCAF1/VPRBP complex, which mediates ubiquitination and proteasome-dependent degradation of proteins such as NF2. Involved in the turnover of methylated proteins: recognizes and binds methylated proteins via its chromo domain, leading to ubiquitination of target proteins by the RBX1-DDB1-DCAF1/VPRBP complex. The CUL4A-RBX1-DDB1-DCAF1/VPRBP complex is also involved in B-cell development: DCAF1 is recruited by RAG1 to ubiquitinate proteins, leading to limit error-prone repair during V(D)J recombination. Also part of the EDVP complex, an E3 ligase complex that mediates ubiquitination of proteins such as TERT, leading to TERT degradation and telomerase inhibition. The EDVP complex also mediates ubiquitination and degradation of CCP110. Also acts as an atypical serine/threonine-protein kinase that specifically mediates phosphorylation of 'Thr-120' of histone H2A (H2AT120ph) in a nucleosomal context, thereby repressing transcription. H2AT120ph is present in the regulatory region of many tumor suppresor genes, down-regulates their transcription and is present at high level in a number of tumors. Involved in JNK-mediated apoptosis during cell competition process via its interaction with LLGL1 and LLGL2. By acting on TET dioxygenses, essential for oocyte maintenance at the primordial follicle stage, hence essential for female fertility. Functionally, (Microbial infection) In case of infection by HIV-1 virus, it is recruited by HIV-1 Vpr in order to hijack the CUL4A-RBX1-DDB1-DCAF1/VPRBP function leading to arrest the cell cycle in G2 phase, and also to protect the viral protein from proteasomal degradation by another E3 ubiquitin ligase. The HIV-1 Vpr protein hijacks the CUL4A-RBX1-DDB1-DCAF1/VPRBP complex to promote ubiquitination and degradation of proteins such as TERT and ZIP/ZGPAT. In terms of biological role, (Microbial infection) In case of infection by HIV-2 virus, it is recruited by HIV-2 Vpx in order to hijack the CUL4A-RBX1-DDB1-DCAF1/VPRBP function leading to enhanced efficiency of macrophage infection and promotion of the replication of cognate primate lentiviruses in cells of monocyte/macrophage lineage. The sequence is that of DDB1- and CUL4-associated factor 1 from Homo sapiens (Human).